The chain runs to 268 residues: Exopolysaccharide production negative regulator (268 aa).

The signal sequence occupies residues 1–22 (MRAGELKSLRVAVLGMSLAVGA).

Functionally, negatively modulates exopolysaccharide (EPS) biosynthesis. The polypeptide is Exopolysaccharide production negative regulator (exoR) (Rhizobium meliloti (strain 1021) (Ensifer meliloti)).